A 383-amino-acid chain; its full sequence is F-box/kelch-repeat protein At2g22030 (383 aa).

Positions 23 to 71 (SLLFSSLPYDVVLNCLARVSRRYYPNLSCVSKSFQSLVRSPELAHMRSL) constitute an F-box domain. Kelch repeat units follow at residues 130–175 (KIYF…VVNG), 176–220 (KLYV…LMRY), and 269–317 (GVCV…GMVD).

In Arabidopsis thaliana (Mouse-ear cress), this protein is F-box/kelch-repeat protein At2g22030.